The sequence spans 115 residues: Phosphoribosyl-ATP pyrophosphatase (115 aa).

The protein belongs to the PRA-PH family.

It is found in the cytoplasm. The catalysed reaction is 1-(5-phospho-beta-D-ribosyl)-ATP + H2O = 1-(5-phospho-beta-D-ribosyl)-5'-AMP + diphosphate + H(+). It participates in amino-acid biosynthesis; L-histidine biosynthesis; L-histidine from 5-phospho-alpha-D-ribose 1-diphosphate: step 2/9. The sequence is that of Phosphoribosyl-ATP pyrophosphatase from Bordetella bronchiseptica (strain ATCC BAA-588 / NCTC 13252 / RB50) (Alcaligenes bronchisepticus).